The primary structure comprises 165 residues: Type 3 secretion system regulator YopR (165 aa).

Positions 2 to 11 (TVTLNRGSIT) are 5' secretion signal. The tract at residues 131-149 (PYLSELINKELMILLPYNS) is 3' secretion signal.

Belongs to the YopR family.

Its subcellular location is the secreted. May be involved in the regulation of the assembly of the type III secretion system (T3SS), also called injectisome, which is used to inject bacterial effector proteins into eukaryotic host cells. May control the secretion and/or polymerization of YscF/SctF, the principal component of the needle filament, thereby impacting the assembly of the T3SS. Involved in pathogenesis. Essential for the establishment of Yersinia infections in a mouse model system. This Yersinia enterocolitica protein is Type 3 secretion system regulator YopR.